The chain runs to 434 residues: Serine--tRNA ligase (434 aa).

An L-serine-binding site is contributed by 237-239 (TAE). 268 to 270 (RAE) is an ATP binding site. E291 contributes to the L-serine binding site. ATP is bound at residue 358–361 (EISS). S393 is an L-serine binding site.

The protein belongs to the class-II aminoacyl-tRNA synthetase family. Type-1 seryl-tRNA synthetase subfamily. In terms of assembly, homodimer. The tRNA molecule binds across the dimer.

The protein localises to the cytoplasm. The enzyme catalyses tRNA(Ser) + L-serine + ATP = L-seryl-tRNA(Ser) + AMP + diphosphate + H(+). It carries out the reaction tRNA(Sec) + L-serine + ATP = L-seryl-tRNA(Sec) + AMP + diphosphate + H(+). Its pathway is aminoacyl-tRNA biosynthesis; selenocysteinyl-tRNA(Sec) biosynthesis; L-seryl-tRNA(Sec) from L-serine and tRNA(Sec): step 1/1. Functionally, catalyzes the attachment of serine to tRNA(Ser). Is also able to aminoacylate tRNA(Sec) with serine, to form the misacylated tRNA L-seryl-tRNA(Sec), which will be further converted into selenocysteinyl-tRNA(Sec). The polypeptide is Serine--tRNA ligase (Rhodopseudomonas palustris (strain ATCC BAA-98 / CGA009)).